A 167-amino-acid chain; its full sequence is Phospholipase A2 inhibitor alpha-like protein (167 aa).

Positions 1 to 19 (MQLILLSSLLLLGLSLANG) are cleaved as a signal peptide. One can recognise a C-type lectin domain in the interval 62–163 (GSERLYVTNK…CDEDLLVVCE (102 aa)). Disulfide bonds link Cys-83/Cys-162 and Cys-140/Cys-154.

Belongs to the alpha-type phospholipase A2 inhibitor family. As to quaternary structure, homotrimer.

It localises to the secreted. Has no PLA2 inhibitory activity. The sequence is that of Phospholipase A2 inhibitor alpha-like protein from Elaphe climacophora (Japanese rat snake).